The following is a 335-amino-acid chain: MKNLILAIESSCDDSSIAIIDKNTLECKFHKKISQELDHSIYGGVVPELAARLHSEALPKILKQCNEHFKNLCAIAVTNEPGLSVSLLSGISMAKTLASALNLPLIPINHLKGHIYSLFLEEKISLDIGILLVSGGHTMVLYLKDDANLELLASTNDDSFGESFDKVAKMMNLGYPGGVIIENLAKNAKLKNISFNIPLKHSKELAYSFSGLKNAVRLEILKHENLSDDIKAEIAYAFENTACDHIMDKLEKIFNLYKFKNFGVVGGASANLNLRSRLQNLCQKYNANLKLAPLKFCSDNALMIARAAVDAYEKKEFVSIEEDILSPKNKNFSRI.

The Fe cation site is built by His-110 and His-114. Substrate is bound by residues 132 to 136, Asp-165, Gly-178, and Asn-271; that span reads LVSGG. Position 299 (Asp-299) interacts with Fe cation.

The protein belongs to the KAE1 / TsaD family. Fe(2+) serves as cofactor.

Its subcellular location is the cytoplasm. The enzyme catalyses L-threonylcarbamoyladenylate + adenosine(37) in tRNA = N(6)-L-threonylcarbamoyladenosine(37) in tRNA + AMP + H(+). Its function is as follows. Required for the formation of a threonylcarbamoyl group on adenosine at position 37 (t(6)A37) in tRNAs that read codons beginning with adenine. Is involved in the transfer of the threonylcarbamoyl moiety of threonylcarbamoyl-AMP (TC-AMP) to the N6 group of A37, together with TsaE and TsaB. TsaD likely plays a direct catalytic role in this reaction. In Campylobacter jejuni subsp. jejuni serotype O:23/36 (strain 81-176), this protein is tRNA N6-adenosine threonylcarbamoyltransferase.